The following is a 101-amino-acid chain: Urease subunit beta (101 aa).

The protein belongs to the urease beta subunit family. Heterotrimer of UreA (gamma), UreB (beta) and UreC (alpha) subunits. Three heterotrimers associate to form the active enzyme.

The protein resides in the cytoplasm. It carries out the reaction urea + 2 H2O + H(+) = hydrogencarbonate + 2 NH4(+). The protein operates within nitrogen metabolism; urea degradation; CO(2) and NH(3) from urea (urease route): step 1/1. This Rhodopseudomonas palustris (strain HaA2) protein is Urease subunit beta.